Consider the following 189-residue polypeptide: Xanthine phosphoribosyltransferase (189 aa).

2 residues coordinate xanthine: L20 and N27. 128–132 contributes to the 5-phospho-alpha-D-ribose 1-diphosphate binding site; the sequence is ANGEA. K156 provides a ligand contact to xanthine.

Belongs to the purine/pyrimidine phosphoribosyltransferase family. Xpt subfamily. As to quaternary structure, homodimer.

It localises to the cytoplasm. It carries out the reaction XMP + diphosphate = xanthine + 5-phospho-alpha-D-ribose 1-diphosphate. Its pathway is purine metabolism; XMP biosynthesis via salvage pathway; XMP from xanthine: step 1/1. Its function is as follows. Converts the preformed base xanthine, a product of nucleic acid breakdown, to xanthosine 5'-monophosphate (XMP), so it can be reused for RNA or DNA synthesis. This Clostridium acetobutylicum (strain ATCC 824 / DSM 792 / JCM 1419 / IAM 19013 / LMG 5710 / NBRC 13948 / NRRL B-527 / VKM B-1787 / 2291 / W) protein is Xanthine phosphoribosyltransferase.